The chain runs to 106 residues: MKPYAIIQTGNKQYQVSEGDVIDVELLDGVSEGQEVVFEQVLFTFDGSKASLGTPTVSNAVVKGEMLSRVRGEKVIAYKYKRRKNYHRKTGHRQNYLRVKISNLVM.

Belongs to the bacterial ribosomal protein bL21 family. Part of the 50S ribosomal subunit. Contacts protein L20.

Functionally, this protein binds to 23S rRNA in the presence of protein L20. The sequence is that of Large ribosomal subunit protein bL21 from Chlamydia felis (strain Fe/C-56) (Chlamydophila felis).